Reading from the N-terminus, the 269-residue chain is Acyl-CoA-binding domain-containing protein 4 (269 aa).

An ACB domain is found at 12–101 (CQKQFQAAVS…MKLVAQKVID (90 aa)). An acyl-CoA contacts are provided by residues 23 to 32 (IQNLPKNGSY), 43 to 47 (YSYYK), Lys69, and Tyr88. 3 disordered regions span residues 150–175 (GAVSEPPCLPKEPAPPSPESHSPRDL), 195–226 (EQRAASGEKRDPRNSPVPPTEKEAAAQAQCSA), and 248–269 (VALPNVSDPKEVTVSGGVSAAN). Positions 156–167 (PCLPKEPAPPSP) are enriched in pro residues. Residues Ser166 and Ser171 each carry the phosphoserine modification.

In terms of biological role, binds medium- and long-chain acyl-CoA esters and may function as an intracellular carrier of acyl-CoA esters. The protein is Acyl-CoA-binding domain-containing protein 4 (ACBD4) of Pongo abelii (Sumatran orangutan).